The following is a 421-amino-acid chain: Zinc finger protein 584 (421 aa).

In terms of domain architecture, KRAB spans 17 to 88 (VMFEDVTVYF…SWVDVTPVSR (72 aa)). The span at 120 to 129 (QHQDTHSEGK) shows a compositional bias: basic and acidic residues. The disordered stretch occupies residues 120 to 146 (QHQDTHSEGKPRRHTEHGAAFPPGSSC). 8 C2H2-type zinc fingers span residues 159–181 (FKCS…LITH), 214–236 (HVCN…QKVH), 242–264 (FKCS…QRIH), 270–292 (YECS…RKVH), 298–320 (YECT…QRVH), 326–348 (FECK…WKVH), 354–376 (YECS…QQFH), and 382–404 (YECT…KKVH). The segment at 402 to 421 (KVHTPERRQEDRAHGKVVSC) is disordered. Over residues 404-415 (HTPERRQEDRAH) the composition is skewed to basic and acidic residues.

It belongs to the krueppel C2H2-type zinc-finger protein family.

The protein localises to the nucleus. Functionally, may be involved in transcriptional regulation. The protein is Zinc finger protein 584 (ZNF584) of Homo sapiens (Human).